An 876-amino-acid polypeptide reads, in one-letter code: Liprin-beta-2 (876 aa).

Residues 101–313 (AASNETYQER…TGLLNQYRKV (213 aa)) are a coiled coil. Phosphoserine occurs at positions 329, 363, and 387. The tract at residues 356-376 (EMPPRCSSPTVGPPPLPQKSL) is disordered. Disordered stretches follow at residues 425–451 (LPGK…PDAT) and 470–500 (VVND…PKGI). Positions 473 to 489 (DLSSTSSGTESGPQSPL) are enriched in polar residues. At S512 the chain carries Phosphoserine. A disordered region spans residues 527–553 (RGGLRATAGPRLSRTRDSKGQKSDANA). 3 consecutive SAM domains span residues 558 to 622 (WSTE…INTK), 630 to 693 (LDHI…LHVN), and 718 to 783 (WSNH…KFNA).

The protein belongs to the liprin family. Liprin-beta subfamily. As to quaternary structure, forms homodimers and heterodimers. Widely expressed.

In terms of biological role, may regulate the disassembly of focal adhesions. Did not bind receptor-like tyrosine phosphatases type 2A. The sequence is that of Liprin-beta-2 (PPFIBP2) from Homo sapiens (Human).